We begin with the raw amino-acid sequence, 445 residues long: Chromosome partition protein MukF (445 aa).

The tract at residues 213-241 (LSETSSTLRELQDTLQAASDELQTQILDI) is leucine-zipper.

Belongs to the MukF family. As to quaternary structure, interacts, and probably forms a ternary complex, with MukE and MukB via its C-terminal region. The complex formation is stimulated by calcium or magnesium. It is required for an interaction between MukE and MukB.

It is found in the cytoplasm. The protein localises to the nucleoid. Its function is as follows. Involved in chromosome condensation, segregation and cell cycle progression. May participate in facilitating chromosome segregation by condensation DNA from both sides of a centrally located replisome during cell division. Not required for mini-F plasmid partitioning. Probably acts via its interaction with MukB and MukE. Overexpression results in anucleate cells. It has a calcium binding activity. The sequence is that of Chromosome partition protein MukF from Vibrio parahaemolyticus serotype O3:K6 (strain RIMD 2210633).